A 1321-amino-acid polypeptide reads, in one-letter code: C-Jun-amino-terminal kinase-interacting protein 4 (1321 aa).

M1 is modified (N-acetylmethionine). In terms of domain architecture, RH1 spans 7 to 95; sequence VVYQEEPGGS…ITQYEREKAL (89 aa). Residues 66–166 adopt a coiled-coil conformation; sequence AQDQEHQVEL…NALHQRHTEM (101 aa). S109, S183, S185, S194, and S203 each carry phosphoserine. The interval 203-292 is disordered; the sequence is SLGIFPLPAG…SDVATIPTDT (90 aa). T217 is subject to Phosphothreonine. Polar residues predominate over residues 236–253; sequence ELSQPRSHTSLKVSNSPE. A phosphoserine mark is found at S238, S251, S265, S268, and S272. A compositionally biased stretch (polar residues) spans 266-285; the sequence is DVSQGGSKATTPASTANSDV. T292 carries the post-translational modification Phosphothreonine. A phosphoserine mark is found at S311, S329, S332, and S347. Phosphothreonine is present on residues T348, T365, and T418. A coiled-coil region spans residues 408–534; sequence REVENLILEN…LQEAVRWTEM (127 aa). Positions 473-489 are enriched in basic and acidic residues; that stretch reads LRKARAEAEDARQKAKD. Disordered stretches follow at residues 473–500 and 563–600; these read LRKA…TAQR and SSNT…SQLP. In terms of domain architecture, RH2 spans 500 to 571; sequence RKRFTRVEMA…SSSNTTKKPE (72 aa). T586 carries the phosphothreonine modification. A Phosphoserine modification is found at S588. T595 is modified (phosphothreonine). Residues S705, S728, S730, S732, and S733 each carry the phosphoserine modification. Positions 724–758 form a coiled coil; sequence SKQRSASQSSLDKLDQELKEQQKELKNQEELSSLV. A disordered region spans residues 854–906; it reads GAATSPSTNGASPVMDKPPEMEAENSEVDENVPTAEEATEATEGNAGSAEDTV. A compositionally biased stretch (polar residues) spans 855 to 864; the sequence is AATSPSTNGA. Acidic residues predominate over residues 874 to 883; the sequence is MEAENSEVDE. The span at 894–903 shows a compositional bias: low complexity; it reads ATEGNAGSAE. Phosphoserine is present on S1188. Residues 1239–1266 are disordered; it reads PQSSSSGTDLTGDKAGPSAQEPGSQTPL. T1264 bears the Phosphothreonine mark.

This sequence belongs to the JIP scaffold family. Homodimer. The homodimer interacts with ARF6, forming a heterotetramer. Homooligomer. Interacts with MAX, MAPK14, MAP3K3, MYC, KNS2 and MAP2K4. Interaction with KNS2 is important in the formation of ternary complex with MAPK8. Interacts with NFKB1. Interacts with PIP4P1. Interacts with PIKFYVE. As to quaternary structure, interacts with MAPK8, MAPK9, MAPK10. In terms of processing, phosphorylated by MAPK8 and MAPK14. In terms of tissue distribution, expressed only in testis on the round spermatids of stage I, II and II. Absent in spermatogonia and spermatocyte. Expressed in testis and in acute myeloid leukemia (AML) patients. As to expression, expressed in testis.

The protein localises to the cytoplasm. The protein resides in the perinuclear region. Its subcellular location is the lysosome membrane. It is found in the cytoplasmic vesicle. It localises to the secretory vesicle. The protein localises to the acrosome. May play a role in spermatozoa-egg-interaction. The JNK-interacting protein (JIP) group of scaffold proteins selectively mediates JNK signaling by aggregating specific components of the MAPK cascade to form a functional JNK signaling module. Regulates lysosomal positioning by acting as an adapter protein which links PIP4P1-positive lysosomes to the dynein-dynactin complex. Assists PIKFYVE selective functionality in microtubule-based endosome-to-TGN trafficking. This chain is C-Jun-amino-terminal kinase-interacting protein 4, found in Homo sapiens (Human).